A 690-amino-acid chain; its full sequence is Eukaryotic translation initiation factor 3 subunit B (690 aa).

Positions 1-11 (MAKKKSEEHSG) are enriched in basic and acidic residues. The interval 1 to 36 (MAKKKSEEHSGADANDSDYQEEPNFEDPPGFVDNIS) is disordered. Over residues 15–25 (NDSDYQEEPNF) the composition is skewed to acidic residues. An RRM domain is found at 57 to 141 (SVVVVDNIPK…HTFAVNLFTD (85 aa)). 5 WD repeats span residues 207-246 (TRER…KIQK), 293-331 (DGMS…LLDL), 334-369 (IKIP…TLME), 442-484 (EIRE…KPSL), and 530-575 (PDHF…IKRT). Residues 595–645 (EEKQKEIKKNLKKYYAAFEQKDRLRLTRASKELLEKRSQLRETFMEYRNKR) adopt a coiled-coil conformation.

This sequence belongs to the eIF-3 subunit B family. Component of the eukaryotic translation initiation factor 3 (eIF-3) complex. The eIF-3 complex interacts with pix. Interacts with mxt.

The protein resides in the cytoplasm. In terms of biological role, RNA-binding component of the eukaryotic translation initiation factor 3 (eIF-3) complex, which is involved in protein synthesis of a specialized repertoire of mRNAs and, together with other initiation factors, stimulates binding of mRNA and methionyl-tRNAi to the 40S ribosome. The eIF-3 complex specifically targets and initiates translation of a subset of mRNAs involved in cell proliferation. This chain is Eukaryotic translation initiation factor 3 subunit B, found in Drosophila simulans (Fruit fly).